The chain runs to 356 residues: Ion-translocating oxidoreductase complex subunit D (356 aa).

A run of 4 helical transmembrane segments spans residues 20 to 40 (LMLL…WFFG), 42 to 62 (GVLV…ALAI), 68 to 88 (PVGF…IGVS), and 117 to 137 (GFNP…SFPV). T177 carries the post-translational modification FMN phosphoryl threonine. Helical transmembrane passes span 205–225 (WASA…LYLL), 229–249 (VYTW…AALF), 259–279 (GSPL…FIVT), 292–312 (VIYG…GSSY), and 315–335 (GVAF…YYTT).

It belongs to the NqrB/RnfD family. In terms of assembly, the complex is composed of six subunits: RnfA, RnfB, RnfC, RnfD, RnfE and RnfG. It depends on FMN as a cofactor.

The protein resides in the cell inner membrane. Part of a membrane-bound complex that couples electron transfer with translocation of ions across the membrane. The polypeptide is Ion-translocating oxidoreductase complex subunit D (Cellvibrio japonicus (strain Ueda107) (Pseudomonas fluorescens subsp. cellulosa)).